A 288-amino-acid polypeptide reads, in one-letter code: UTP--glucose-1-phosphate uridylyltransferase (288 aa).

The protein belongs to the UDPGP type 2 family.

The enzyme catalyses alpha-D-glucose 1-phosphate + UTP + H(+) = UDP-alpha-D-glucose + diphosphate. It functions in the pathway glycolipid metabolism; diglucosyl-diacylglycerol biosynthesis. Its function is as follows. Catalyzes the formation of UDP-glucose from glucose-1-phosphate and UTP. This is an intermediate step in the biosynthesis of diglucosyl-diacylglycerol (Glc2-DAG), i.e. the predominant glycolipid found in the S.aureus membrane, which is also used as a membrane anchor for lipoteichoic acid (LTA). The sequence is that of UTP--glucose-1-phosphate uridylyltransferase (gtaB) from Staphylococcus aureus (strain MRSA252).